Consider the following 330-residue polypeptide: Embigin (330 aa).

A signal peptide spans 1-33 (MRSHTGLRALVAPGYPLLLLCLLAATRPDPAEG). Over 34–254 (DPTDPTFTSL…QLGESEEQNE (221 aa)) the chain is Extracellular. Ig-like V-type domains are found at residues 38 to 161 (PTFT…IHVP) and 162 to 256 (KAHG…NELV). Asparagine 55, asparagine 62, asparagine 70, asparagine 101, asparagine 118, asparagine 191, asparagine 198, asparagine 216, and asparagine 221 each carry an N-linked (GlcNAc...) asparagine glycan. Cystine bridges form between cysteine 89/cysteine 145 and cysteine 182/cysteine 240. The chain crosses the membrane as a helical span at residues 255–283 (LVVLSFLVPLKPFLAILAEVILLVAIILL). Residues 284–330 (CEVYTHKKKNDPDAGKEFEQIEQLKSDDSNGIENNVPRYRKTDSADQ) are Cytoplasmic-facing. Positions 293 to 311 (NDPDAGKEFEQIEQLKSDD) are enriched in basic and acidic residues. Residues 293–330 (NDPDAGKEFEQIEQLKSDDSNGIENNVPRYRKTDSADQ) form a disordered region. Residue serine 312 is modified to Phosphoserine.

In terms of assembly, interacts with SLC16A1, SLC16A6 and SLC16A7. Only member of the immunoglobulin superfamily to be expressed in embryonal carcinoma cells, which resemble multipotential cells of early embryos.

Its subcellular location is the cell membrane. It is found in the synapse. Its function is as follows. Plays a role in targeting the monocarboxylate transporters SLC16A1, SLC16A6 and SLC16A7 to the cell membrane. Plays a role in the outgrowth of motoneurons and in the formation of neuromuscular junctions. Following muscle denervation, promotes nerve terminal sprouting and the formation of additional acetylcholine receptor clusters at synaptic sites without affecting terminal Schwann cell number or morphology. Delays the retraction of terminal sprouts following re-innervation of denervated endplates. The chain is Embigin (Emb) from Mus musculus (Mouse).